Reading from the N-terminus, the 136-residue chain is Large ribosomal subunit protein uL16 (136 aa).

The protein belongs to the universal ribosomal protein uL16 family. Part of the 50S ribosomal subunit.

Functionally, binds 23S rRNA and is also seen to make contacts with the A and possibly P site tRNAs. The sequence is that of Large ribosomal subunit protein uL16 from Photobacterium profundum (strain SS9).